A 97-amino-acid polypeptide reads, in one-letter code: Nuclear protein 2 (97 aa).

The interval 76–97 (LLNGQRKRRQRQLHPKMRTRLT) is disordered. The segment covering 80–97 (QRKRRQRQLHPKMRTRLT) has biased composition (basic residues).

This sequence belongs to the NUPR family.

It localises to the nucleus. In terms of biological role, acts as a transcriptional repressor by inhibiting gene expression at the NUPR1 promoter in a p53/TP53-dependent manner in cancer cells. Involved in the G1 cell cycle arrest, and in a decrease in cell viability and cell proliferation. Plays a role as a negative regulator of the protumoral factor NUPR1. This Homo sapiens (Human) protein is Nuclear protein 2.